The sequence spans 709 residues: Polyribonucleotide nucleotidyltransferase (709 aa).

Residues Asp487 and Asp493 each coordinate Mg(2+). The 60-residue stretch at 554 to 613 (PRIHTMKISVEKIKDVIGKGGAVIRQLTEETGTTIEIEDDGTIKIAATDGDQAKEAIRRI) folds into the KH domain. An S1 motif domain is found at 623-691 (GVIYTGKVAR…RQGRVRLSMK (69 aa)).

It belongs to the polyribonucleotide nucleotidyltransferase family. In terms of assembly, component of the RNA degradosome, which is a multiprotein complex involved in RNA processing and mRNA degradation. It depends on Mg(2+) as a cofactor.

The protein resides in the cytoplasm. The catalysed reaction is RNA(n+1) + phosphate = RNA(n) + a ribonucleoside 5'-diphosphate. Involved in mRNA degradation. Catalyzes the phosphorolysis of single-stranded polyribonucleotides processively in the 3'- to 5'-direction. The polypeptide is Polyribonucleotide nucleotidyltransferase (Vibrio cholerae serotype O1 (strain ATCC 39315 / El Tor Inaba N16961)).